The following is an 83-amino-acid chain: U4-theraphotoxin-Hhn1x (83 aa).

Positions 1 to 20 are cleaved as a signal peptide; the sequence is MTLIAILTCAAALVLHTTAA. Residues 21 to 46 constitute a propeptide that is removed on maturation; sequence EELEAESQLMEVGMPDTELEAVDEER. 3 disulfide bridges follow: Cys-50-Cys-64, Cys-54-Cys-75, and Cys-69-Cys-80.

It belongs to the neurotoxin 12 (Hwtx-2) family. 02 (Hwtx-2) subfamily. In terms of tissue distribution, expressed by the venom gland.

It localises to the secreted. Postsynaptic neurotoxin. This is U4-theraphotoxin-Hhn1x from Cyriopagopus hainanus (Chinese bird spider).